The sequence spans 509 residues: Maturase K (509 aa).

It belongs to the intron maturase 2 family. MatK subfamily.

The protein resides in the plastid. Its subcellular location is the chloroplast. In terms of biological role, usually encoded in the trnK tRNA gene intron. Probably assists in splicing its own and other chloroplast group II introns. The polypeptide is Maturase K (Metasequoia glyptostroboides (Dawn redwood)).